Consider the following 344-residue polypeptide: DNA-directed RNA polymerase subunit alpha (344 aa).

The segment at 1-238 (MKVIKTAPLI…KQLGVFGERP (238 aa)) is alpha N-terminal domain (alpha-NTD). An alpha C-terminal domain (alpha-CTD) region spans residues 253-344 (DAKDLSAKIE…EKLEDKGGND (92 aa)).

This sequence belongs to the RNA polymerase alpha chain family. Homodimer. The RNAP catalytic core consists of 2 alpha, 1 beta, 1 beta' and 1 omega subunit. When a sigma factor is associated with the core the holoenzyme is formed, which can initiate transcription.

The catalysed reaction is RNA(n) + a ribonucleoside 5'-triphosphate = RNA(n+1) + diphosphate. In terms of biological role, DNA-dependent RNA polymerase catalyzes the transcription of DNA into RNA using the four ribonucleoside triphosphates as substrates. This is DNA-directed RNA polymerase subunit alpha from Helicobacter pylori (strain HPAG1).